The chain runs to 53 residues: U13-myrmicitoxin-Tb1a (53 aa).

Residues 1–23 (MKLIYIFSLVAVIAVTMIPGIMG) form the signal peptide. A propeptide spanning residues 24–29 (EAEAEG) is cleaved from the precursor. Position 52 is a lysine amide (Lys-52).

Expressed by the venom gland.

It is found in the secreted. Functionally, in vivo, this neurotoxin paralyzes about 70% of blowflies (L.caesar) one hour after intrathoracic injection, when tested at high doses (45 nmol/g). In Tetramorium bicarinatum (Tramp ant), this protein is U13-myrmicitoxin-Tb1a.